Reading from the N-terminus, the 467-residue chain is Cis-zeatin O-glucosyltransferase 1 (467 aa).

His21 serves as the catalytic Proton acceptor. Residues His21 and Asn91 each coordinate an anthocyanidin. Asp127 (charge relay) is an active-site residue. Positions 343, 345, 360, 363, 364, 365, 368, 384, and 385 each coordinate UDP-alpha-D-glucose.

Belongs to the UDP-glycosyltransferase family. Highly expressed in root. Expressed at lower level in kernel and cob. Weakly expressed in leaves. Weakly or not expressed in stems.

It catalyses the reaction cis-zeatin + UDP-alpha-D-glucose = O-beta-D-glucosyl-cis-zeatin + UDP + H(+). In terms of biological role, utilizes UDP-glucose as the sugar donor and catalyzes the formation of O-beta-D-glucosyl-cis-zeatin from cis-zeatin. May regulate active versus storage forms of cytokinins and could have an impact on seed growth. The polypeptide is Cis-zeatin O-glucosyltransferase 1 (CISZOG1) (Zea mays (Maize)).